Consider the following 68-residue polypeptide: Large ribosomal subunit protein bL35 (68 aa).

Belongs to the bacterial ribosomal protein bL35 family.

The protein is Large ribosomal subunit protein bL35 of Rickettsia canadensis (strain McKiel).